The primary structure comprises 283 residues: 4-diphosphocytidyl-2-C-methyl-D-erythritol kinase (283 aa).

Residue lysine 10 is part of the active site. ATP is bound at residue 99-109; it reads PMGGGLGGGSS. Aspartate 141 is a catalytic residue.

It belongs to the GHMP kinase family. IspE subfamily. In terms of assembly, homodimer.

The catalysed reaction is 4-CDP-2-C-methyl-D-erythritol + ATP = 4-CDP-2-C-methyl-D-erythritol 2-phosphate + ADP + H(+). The protein operates within isoprenoid biosynthesis; isopentenyl diphosphate biosynthesis via DXP pathway; isopentenyl diphosphate from 1-deoxy-D-xylulose 5-phosphate: step 3/6. Catalyzes the phosphorylation of the position 2 hydroxy group of 4-diphosphocytidyl-2C-methyl-D-erythritol. This Salmonella choleraesuis (strain SC-B67) protein is 4-diphosphocytidyl-2-C-methyl-D-erythritol kinase.